Reading from the N-terminus, the 312-residue chain is Terpene synthase 8 (312 aa).

The DDxx(x)D/E motif motif lies at D96–E101. An NDxxSxxxD/E motif motif is present at residues N224–E232.

The protein belongs to the terpene synthase family.

The enzyme catalyses (2E,6E)-farnesyl diphosphate + H2O = discoidol + diphosphate. It functions in the pathway sesquiterpene biosynthesis. Functionally, terpene synthase; part of the gene cluster that mediates the biosynthesis of the trisnorsesquiterpene discodiene which has a function during later stages of multicellular development, during the transition from fingers to Mexican hats. The terpene synthase tps8 converts its substrate farnesyl diphosphate (FDP) into the bicyclic sesquiterpene alcohol discoidol. The cytochrome P450 monooxygenase cyp521A1 then catalyzes the oxidative degradation of discoidol to form the trisnorsesquiterpene discodiene. In Dictyostelium discoideum (Social amoeba), this protein is Terpene synthase 8.